Consider the following 254-residue polypeptide: UPF0246 protein Fphi_1075 (254 aa).

It belongs to the UPF0246 family.

The sequence is that of UPF0246 protein Fphi_1075 from Francisella philomiragia subsp. philomiragia (strain ATCC 25017 / CCUG 19701 / FSC 153 / O#319-036).